Reading from the N-terminus, the 581-residue chain is NADH-quinone oxidoreductase subunit C/D (581 aa).

The NADH dehydrogenase I subunit C stretch occupies residues 1–172; that stretch reads MSAFELVTEL…PLFNMTASLF (172 aa). The NADH dehydrogenase I subunit D stretch occupies residues 196 to 581; it reads ELMILNYGPH…IDYVMSDVDR (386 aa).

The protein in the N-terminal section; belongs to the complex I 30 kDa subunit family. This sequence in the C-terminal section; belongs to the complex I 49 kDa subunit family. As to quaternary structure, NDH-1 is composed of 13 different subunits. Subunits NuoB, CD, E, F, and G constitute the peripheral sector of the complex.

Its subcellular location is the cell inner membrane. The catalysed reaction is a quinone + NADH + 5 H(+)(in) = a quinol + NAD(+) + 4 H(+)(out). Its function is as follows. NDH-1 shuttles electrons from NADH, via FMN and iron-sulfur (Fe-S) centers, to quinones in the respiratory chain. The immediate electron acceptor for the enzyme in this species is believed to be ubiquinone. Couples the redox reaction to proton translocation (for every two electrons transferred, four hydrogen ions are translocated across the cytoplasmic membrane), and thus conserves the redox energy in a proton gradient. This is NADH-quinone oxidoreductase subunit C/D from Rhodopseudomonas palustris (strain ATCC BAA-98 / CGA009).